The primary structure comprises 373 residues: 4-hydroxy-3-methylbut-2-en-1-yl diphosphate synthase (flavodoxin) (373 aa).

Residues cysteine 270, cysteine 273, cysteine 305, and glutamate 312 each contribute to the [4Fe-4S] cluster site.

This sequence belongs to the IspG family. The cofactor is [4Fe-4S] cluster.

It carries out the reaction (2E)-4-hydroxy-3-methylbut-2-enyl diphosphate + oxidized [flavodoxin] + H2O + 2 H(+) = 2-C-methyl-D-erythritol 2,4-cyclic diphosphate + reduced [flavodoxin]. Its pathway is isoprenoid biosynthesis; isopentenyl diphosphate biosynthesis via DXP pathway; isopentenyl diphosphate from 1-deoxy-D-xylulose 5-phosphate: step 5/6. Converts 2C-methyl-D-erythritol 2,4-cyclodiphosphate (ME-2,4cPP) into 1-hydroxy-2-methyl-2-(E)-butenyl 4-diphosphate. This chain is 4-hydroxy-3-methylbut-2-en-1-yl diphosphate synthase (flavodoxin), found in Sodalis glossinidius (strain morsitans).